The chain runs to 227 residues: Agamous-like MADS-box protein AGL8 homolog (227 aa).

The MADS-box domain maps to 3 to 57 (RGRVQLKRIENKINRQVTFSKRRSGLLKKAHEISVLCDAEVGLIVFSTKGKLFEY). Positions 88-178 (PVSWTLEHRK…SKKVKEREKS (91 aa)) constitute a K-box domain.

In terms of tissue distribution, flower specific.

The protein localises to the nucleus. In terms of biological role, probable transcription factor. The polypeptide is Agamous-like MADS-box protein AGL8 homolog (TDR4) (Solanum lycopersicum (Tomato)).